Reading from the N-terminus, the 138-residue chain is Nucleoside diphosphate kinase (138 aa).

Residues Lys10, Phe58, Arg86, Thr92, Arg103, and Asn113 each coordinate ATP. The Pros-phosphohistidine intermediate role is filled by His116.

This sequence belongs to the NDK family. Homotetramer. Requires Mg(2+) as cofactor.

It localises to the cytoplasm. The enzyme catalyses a 2'-deoxyribonucleoside 5'-diphosphate + ATP = a 2'-deoxyribonucleoside 5'-triphosphate + ADP. The catalysed reaction is a ribonucleoside 5'-diphosphate + ATP = a ribonucleoside 5'-triphosphate + ADP. Functionally, major role in the synthesis of nucleoside triphosphates other than ATP. The ATP gamma phosphate is transferred to the NDP beta phosphate via a ping-pong mechanism, using a phosphorylated active-site intermediate. This Glaesserella parasuis serovar 5 (strain SH0165) (Haemophilus parasuis) protein is Nucleoside diphosphate kinase.